Reading from the N-terminus, the 370-residue chain is 3-dehydroquinate synthase (370 aa).

NAD(+) is bound by residues Gly-107–Asp-111, Thr-131–Ser-132, Lys-144, and Lys-153. The Zn(2+) site is built by Glu-186, His-249, and His-267.

It belongs to the sugar phosphate cyclases superfamily. Dehydroquinate synthase family. It depends on Co(2+) as a cofactor. The cofactor is Zn(2+). NAD(+) serves as cofactor.

It is found in the cytoplasm. It carries out the reaction 7-phospho-2-dehydro-3-deoxy-D-arabino-heptonate = 3-dehydroquinate + phosphate. Its pathway is metabolic intermediate biosynthesis; chorismate biosynthesis; chorismate from D-erythrose 4-phosphate and phosphoenolpyruvate: step 2/7. Functionally, catalyzes the conversion of 3-deoxy-D-arabino-heptulosonate 7-phosphate (DAHP) to dehydroquinate (DHQ). This Roseobacter denitrificans (strain ATCC 33942 / OCh 114) (Erythrobacter sp. (strain OCh 114)) protein is 3-dehydroquinate synthase.